The sequence spans 502 residues: Maturase K (502 aa).

Belongs to the intron maturase 2 family. MatK subfamily.

It is found in the plastid. Its subcellular location is the chloroplast. In terms of biological role, usually encoded in the trnK tRNA gene intron. Probably assists in splicing its own and other chloroplast group II introns. The protein is Maturase K of Fremontodendron californicum (California flannelbush).